The primary structure comprises 80 residues: UPF0180 protein BPUM_1317 (80 aa).

It belongs to the UPF0180 family.

The protein is UPF0180 protein BPUM_1317 of Bacillus pumilus (strain SAFR-032).